A 227-amino-acid chain; its full sequence is Cytochrome c oxidase subunit 2 (227 aa).

At Met1 to Ser14 the chain is on the mitochondrial intermembrane side. The chain crosses the membrane as a helical span at residues Pro15–Met45. The Mitochondrial matrix portion of the chain corresponds to Leu46–Gln59. Residues Glu60–Met87 form a helical membrane-spanning segment. Over Asp88–Leu227 the chain is Mitochondrial intermembrane. 6 residues coordinate Cu cation: His161, Cys196, Glu198, Cys200, His204, and Met207. A Mg(2+)-binding site is contributed by Glu198. Residue Tyr218 is modified to Phosphotyrosine.

This sequence belongs to the cytochrome c oxidase subunit 2 family. As to quaternary structure, component of the cytochrome c oxidase (complex IV, CIV), a multisubunit enzyme composed of 14 subunits. The complex is composed of a catalytic core of 3 subunits MT-CO1, MT-CO2 and MT-CO3, encoded in the mitochondrial DNA, and 11 supernumerary subunits COX4I, COX5A, COX5B, COX6A, COX6B, COX6C, COX7A, COX7B, COX7C, COX8 and NDUFA4, which are encoded in the nuclear genome. The complex exists as a monomer or a dimer and forms supercomplexes (SCs) in the inner mitochondrial membrane with NADH-ubiquinone oxidoreductase (complex I, CI) and ubiquinol-cytochrome c oxidoreductase (cytochrome b-c1 complex, complex III, CIII), resulting in different assemblies (supercomplex SCI(1)III(2)IV(1) and megacomplex MCI(2)III(2)IV(2)). Found in a complex with TMEM177, COA6, COX18, COX20, SCO1 and SCO2. Interacts with TMEM177 in a COX20-dependent manner. Interacts with COX20. Interacts with COX16. Cu cation is required as a cofactor.

It localises to the mitochondrion inner membrane. The catalysed reaction is 4 Fe(II)-[cytochrome c] + O2 + 8 H(+)(in) = 4 Fe(III)-[cytochrome c] + 2 H2O + 4 H(+)(out). Functionally, component of the cytochrome c oxidase, the last enzyme in the mitochondrial electron transport chain which drives oxidative phosphorylation. The respiratory chain contains 3 multisubunit complexes succinate dehydrogenase (complex II, CII), ubiquinol-cytochrome c oxidoreductase (cytochrome b-c1 complex, complex III, CIII) and cytochrome c oxidase (complex IV, CIV), that cooperate to transfer electrons derived from NADH and succinate to molecular oxygen, creating an electrochemical gradient over the inner membrane that drives transmembrane transport and the ATP synthase. Cytochrome c oxidase is the component of the respiratory chain that catalyzes the reduction of oxygen to water. Electrons originating from reduced cytochrome c in the intermembrane space (IMS) are transferred via the dinuclear copper A center (CU(A)) of subunit 2 and heme A of subunit 1 to the active site in subunit 1, a binuclear center (BNC) formed by heme A3 and copper B (CU(B)). The BNC reduces molecular oxygen to 2 water molecules using 4 electrons from cytochrome c in the IMS and 4 protons from the mitochondrial matrix. The polypeptide is Cytochrome c oxidase subunit 2 (MT-CO2) (Daubentonia madagascariensis (Aye-aye)).